A 448-amino-acid chain; its full sequence is Allantoinase (448 aa).

6 residues coordinate Zn(2+): H60, H62, K147, H183, H239, and D312. K147 carries the post-translational modification N6-carboxylysine.

Belongs to the metallo-dependent hydrolases superfamily. Allantoinase family. In terms of assembly, homotetramer. Requires Zn(2+) as cofactor. In terms of processing, carboxylation allows a single lysine to coordinate two zinc ions.

It catalyses the reaction (S)-allantoin + H2O = allantoate + H(+). It participates in nitrogen metabolism; (S)-allantoin degradation; allantoate from (S)-allantoin: step 1/1. Catalyzes the conversion of allantoin (5-ureidohydantoin) to allantoic acid by hydrolytic cleavage of the five-member hydantoin ring. The protein is Allantoinase of Deinococcus radiodurans (strain ATCC 13939 / DSM 20539 / JCM 16871 / CCUG 27074 / LMG 4051 / NBRC 15346 / NCIMB 9279 / VKM B-1422 / R1).